The following is a 396-amino-acid chain: Elongation factor Tu (396 aa).

The 197-residue stretch at 10 to 206 (KPHVNVGTIG…ALDTYIPTPE (197 aa)) folds into the tr-type G domain. The G1 stretch occupies residues 19 to 26 (GHVDHGKT). Residue 19–26 (GHVDHGKT) participates in GTP binding. Threonine 26 lines the Mg(2+) pocket. The tract at residues 60–64 (GITIN) is G2. The interval 81-84 (DCPG) is G3. GTP-binding positions include 81 to 85 (DCPGH) and 136 to 139 (NKAD). The G4 stretch occupies residues 136-139 (NKAD). The segment at 174 to 176 (SAK) is G5.

The protein belongs to the TRAFAC class translation factor GTPase superfamily. Classic translation factor GTPase family. EF-Tu/EF-1A subfamily. In terms of assembly, monomer.

The protein resides in the cytoplasm. It carries out the reaction GTP + H2O = GDP + phosphate + H(+). Functionally, GTP hydrolase that promotes the GTP-dependent binding of aminoacyl-tRNA to the A-site of ribosomes during protein biosynthesis. In Janthinobacterium sp. (strain Marseille) (Minibacterium massiliensis), this protein is Elongation factor Tu.